The sequence spans 309 residues: Ribonuclease Z (309 aa).

His-63, His-65, Asp-67, His-68, His-143, Asp-213, and His-271 together coordinate Zn(2+). Asp-67 serves as the catalytic Proton acceptor.

Belongs to the RNase Z family. Homodimer. The cofactor is Zn(2+).

The catalysed reaction is Endonucleolytic cleavage of RNA, removing extra 3' nucleotides from tRNA precursor, generating 3' termini of tRNAs. A 3'-hydroxy group is left at the tRNA terminus and a 5'-phosphoryl group is left at the trailer molecule.. Functionally, zinc phosphodiesterase, which displays some tRNA 3'-processing endonuclease activity. Probably involved in tRNA maturation, by removing a 3'-trailer from precursor tRNA. The protein is Ribonuclease Z of Phocaeicola vulgatus (strain ATCC 8482 / DSM 1447 / JCM 5826 / CCUG 4940 / NBRC 14291 / NCTC 11154) (Bacteroides vulgatus).